A 512-amino-acid chain; its full sequence is Oryzalexin E synthase (512 aa).

A helical membrane pass occupies residues 6 to 26; sequence SELWMTAVATCMSLLLYLTIL. Cys-452 contacts heme.

Belongs to the cytochrome P450 family. Requires heme as cofactor.

It is found in the membrane. The catalysed reaction is ent-sandaracopimaradien-3beta-ol + reduced [NADPH--hemoprotein reductase] + O2 = oryzalexin E + oxidized [NADPH--hemoprotein reductase] + H2O + H(+). In terms of biological role, enzyme of the diterpenoid metabolism involved in the biosynthesis of the oryzalexin class of phytoalexins. Can use ent-sandaracopimaradien and syn-stemodene as substrates, but no activity with syn-stemoden-19-oic acid. Hydroxylates 3-alpha-hydroxy-ent-sandaracopimaradiene at C-9-beta, resulting in a 3-alpha,9-beta-diol corresponding to oryzalexins E. This chain is Oryzalexin E synthase, found in Oryza sativa subsp. japonica (Rice).